We begin with the raw amino-acid sequence, 302 residues long: Heat stress transcription factor B-1 (302 aa).

Low complexity predominate over residues 1–15 (MAAAEAAAAVGKQQQ). Disordered stretches follow at residues 1–33 (MAAA…PFLT) and 116–184 (GIRR…RKDN). Gly residues predominate over residues 16 to 28 (KGGGGRGGGGGGP). Positions 123–133 (TTPQSSKSCGS) are enriched in polar residues. Positions 139 to 150 (FPPPLPPLPPEP) are enriched in pro residues. Positions 151 to 172 (SATTSSGNDRSSSSASSPPRAD) are enriched in low complexity. A coiled-coil region spans residues 170–202 (RADITSENEQLRKDNQTLTMELARARRHCEELL). The segment at 180 to 209 (LRKDNQTLTMELARARRHCEELLGFLSRFL) is hydrophobic repeat HR-A/B. The short motif at 211-218 (VRQLDLRL) is the Nuclear export signal element. The Nuclear localization signal motif lies at 263–267 (RKRAR).

The protein belongs to the HSF family. Class B subfamily. Homotrimer. In terms of processing, exhibits temperature-dependent phosphorylation.

The protein localises to the cytoplasm. Its subcellular location is the nucleus. In terms of biological role, transcriptional regulator that specifically binds DNA of heat shock promoter elements (HSE). This Oryza sativa subsp. japonica (Rice) protein is Heat stress transcription factor B-1 (HSFB1).